The following is a 236-amino-acid chain: Small ribosomal subunit protein uS2c (236 aa).

Belongs to the universal ribosomal protein uS2 family.

The protein resides in the plastid. It localises to the chloroplast. The chain is Small ribosomal subunit protein uS2c (rps2) from Agrostis stolonifera (Creeping bentgrass).